The following is a 691-amino-acid chain: DNA ligase (691 aa).

Residues 41–45, 90–91, and glutamate 130 each bind NAD(+); these read DAEYD and SL. The active-site N6-AMP-lysine intermediate is the lysine 132. Residues arginine 153, glutamate 190, lysine 307, and lysine 331 each coordinate NAD(+). Zn(2+) contacts are provided by cysteine 425, cysteine 428, cysteine 443, and cysteine 449. Residues 610-691 form the BRCT domain; sequence APQGVLAGKT…LHQLLEGNTP (82 aa).

This sequence belongs to the NAD-dependent DNA ligase family. LigA subfamily. Mg(2+) is required as a cofactor. Mn(2+) serves as cofactor.

It catalyses the reaction NAD(+) + (deoxyribonucleotide)n-3'-hydroxyl + 5'-phospho-(deoxyribonucleotide)m = (deoxyribonucleotide)n+m + AMP + beta-nicotinamide D-nucleotide.. Functionally, DNA ligase that catalyzes the formation of phosphodiester linkages between 5'-phosphoryl and 3'-hydroxyl groups in double-stranded DNA using NAD as a coenzyme and as the energy source for the reaction. It is essential for DNA replication and repair of damaged DNA. The polypeptide is DNA ligase (Burkholderia lata (strain ATCC 17760 / DSM 23089 / LMG 22485 / NCIMB 9086 / R18194 / 383)).